We begin with the raw amino-acid sequence, 146 residues long: Hemoglobin subunit beta-C (146 aa).

Positions 2-146 (EWTDFERATI…VVSSLGRQYH (145 aa)) constitute a Globin domain. Heme b-binding residues include histidine 63 and histidine 92.

This sequence belongs to the globin family. As to quaternary structure, hbC is a heterotetramer of two alpha chains and two beta-C chains. In terms of tissue distribution, red blood cells.

Its function is as follows. Involved in oxygen transport from gills to the various peripheral tissues. In Trematomus bernacchii (Emerald rockcod), this protein is Hemoglobin subunit beta-C (hbbc).